The primary structure comprises 56 residues: Large ribosomal subunit protein bL32 (56 aa).

A compositionally biased stretch (basic residues) spans Met-1–Arg-16. Positions Met-1 to Ser-28 are disordered.

Belongs to the bacterial ribosomal protein bL32 family.

The chain is Large ribosomal subunit protein bL32 from Vibrio campbellii (strain ATCC BAA-1116).